The chain runs to 285 residues: MFFESRPIVGVGGGGGACGGLLTCVGRDAEGKGGADTLGREILELFLWWLLCAGLTEGICGLFCGTFGAEAPDNGSGGAGDDGTMGIGGAAEDGISGIGGAEDEGILGTAGAGDNGALGMGGAATDGTAPGIGGALADGEGLVLALLLICFNFGIPPAKISPNCGAPIPGIGGADIEGPLLLTVPELPEADETTPPPTIGALLSLVSAFFSFIPFLMSPNRASRPCITDFAGLGALPPNAGGGGGGGGAGAPAISTIRYIYGRLLQQTVVRFLVVCFVSYQKLSS.

The helical transmembrane segment at 197 to 217 threads the bilayer; sequence PTIGALLSLVSAFFSFIPFLM.

Its subcellular location is the membrane. This is an uncharacterized protein from Saccharomyces cerevisiae (strain ATCC 204508 / S288c) (Baker's yeast).